The primary structure comprises 534 residues: CTP synthase (534 aa).

The interval 1-266 (MKQKFIFVTG…DELIVARLGL (266 aa)) is amidoligase domain. S14 is a CTP binding site. UTP is bound at residue S14. Residues 15-20 (SIGKGL) and D72 each bind ATP. 2 residues coordinate Mg(2+): D72 and E140. CTP-binding positions include 147–149 (DIE), 187–192 (KSKPTQ), and K223. UTP is bound by residues 187 to 192 (KSKPTQ) and K223. In terms of domain architecture, Glutamine amidotransferase type-1 spans 291 to 534 (KIGVVGKYVD…HFVKASLKKK (244 aa)). Residue G353 coordinates L-glutamine. C380 functions as the Nucleophile; for glutamine hydrolysis in the catalytic mechanism. L-glutamine-binding positions include 381 to 384 (FGMQ), E404, and R464. Catalysis depends on residues H509 and E511.

Belongs to the CTP synthase family. Homotetramer.

It carries out the reaction UTP + L-glutamine + ATP + H2O = CTP + L-glutamate + ADP + phosphate + 2 H(+). The enzyme catalyses L-glutamine + H2O = L-glutamate + NH4(+). It catalyses the reaction UTP + NH4(+) + ATP = CTP + ADP + phosphate + 2 H(+). The protein operates within pyrimidine metabolism; CTP biosynthesis via de novo pathway; CTP from UDP: step 2/2. With respect to regulation, allosterically activated by GTP, when glutamine is the substrate; GTP has no effect on the reaction when ammonia is the substrate. The allosteric effector GTP functions by stabilizing the protein conformation that binds the tetrahedral intermediate(s) formed during glutamine hydrolysis. Inhibited by the product CTP, via allosteric rather than competitive inhibition. Functionally, catalyzes the ATP-dependent amination of UTP to CTP with either L-glutamine or ammonia as the source of nitrogen. Regulates intracellular CTP levels through interactions with the four ribonucleotide triphosphates. This chain is CTP synthase, found in Bdellovibrio bacteriovorus (strain ATCC 15356 / DSM 50701 / NCIMB 9529 / HD100).